The sequence spans 990 residues: Storkhead-box protein 1 (990 aa).

A compositionally biased stretch (basic and acidic residues) spans 396–408 (TTRHKDSSKEVIG). Disordered stretches follow at residues 396–471 (TTRH…VHHL), 562–586 (VAKA…PRRV), 712–736 (GLSD…DGGC), and 809–832 (LFSN…SRIP). Basic residues predominate over residues 416–431 (KSRRRGSSHKGRHKAR). Positions 809-830 (LFSNAGESPNPDLSDNPGQNSR) are enriched in polar residues.

Detected in sensory epithelial cells of the inner ear but not in adjacent surrounding tissue (at protein level).

Its subcellular location is the nucleus. It is found in the cytoplasm. The protein localises to the cytoskeleton. The protein resides in the microtubule organizing center. It localises to the centrosome. In terms of biological role, involved in regulating the levels of reactive oxidative species and reactive nitrogen species and in mitochondrial homeostasis in the placenta. Required for regulation of inner ear epithelial cell proliferation via the AKT signaling pathway. Involved in cell cycle regulation by binding to the CCNB1 promoter, up-regulating its expression and promoting mitotic entry. Induces phosphorylation of MAPT/tau. In Mus musculus (Mouse), this protein is Storkhead-box protein 1.